The chain runs to 120 residues: Large ribosomal subunit protein eL8 (120 aa).

The protein belongs to the eukaryotic ribosomal protein eL8 family. As to quaternary structure, part of the 50S ribosomal subunit. Probably part of the RNase P complex.

The protein localises to the cytoplasm. Multifunctional RNA-binding protein that recognizes the K-turn motif in ribosomal RNA, the RNA component of RNase P, box H/ACA, box C/D and box C'/D' sRNAs. The polypeptide is Large ribosomal subunit protein eL8 (Methanosarcina acetivorans (strain ATCC 35395 / DSM 2834 / JCM 12185 / C2A)).